A 345-amino-acid chain; its full sequence is MDYKTAGVDVKAGRAFVDLIKTSVNETSRPEVIGGIGGFGGFMRLPHGLENPVLVAGTDGVGTKLELAQDYHAHFGVGIDLVAMCVNDVITSGAEPLLFLDYIATGKLAPKDLSEVVKGIAEGCKKSNCVLLGGETAEMPGFYSKGRYDLAGFCLAVVEEKKIIDGSTIKAGDQIIGVQSNGLHSNGFSLVRKVLGMSGANKSILVDTKKTPLIDSLLQPTALYVELVQSLLKHTIPIKGMAHITGGGLPENLPRCLPNGLNAFIEPGSWDIPEIFFWLKKAGHIPEDDWWNTFNLGIGFCLVVSTDQVEAALEICTEIGWDAWTIGRVQEPTVPGQQRLIGLPE.

It belongs to the AIR synthase family.

The protein localises to the cytoplasm. The catalysed reaction is 2-formamido-N(1)-(5-O-phospho-beta-D-ribosyl)acetamidine + ATP = 5-amino-1-(5-phospho-beta-D-ribosyl)imidazole + ADP + phosphate + H(+). It participates in purine metabolism; IMP biosynthesis via de novo pathway; 5-amino-1-(5-phospho-D-ribosyl)imidazole from N(2)-formyl-N(1)-(5-phospho-D-ribosyl)glycinamide: step 2/2. This chain is Phosphoribosylformylglycinamidine cyclo-ligase, found in Prochlorococcus marinus (strain MIT 9211).